Reading from the N-terminus, the 191-residue chain is Small ribosomal subunit protein uS7 (191 aa).

Residues 56 to 80 form a disordered region; it reads NKSGEQGDGDGEGGGKAGGIKKRSL.

The protein belongs to the universal ribosomal protein uS7 family. Part of the 30S ribosomal subunit. Contacts proteins S9 and S11.

Functionally, one of the primary rRNA binding proteins, it binds directly to 16S rRNA where it nucleates assembly of the head domain of the 30S subunit. Is located at the subunit interface close to the decoding center, probably blocks exit of the E-site tRNA. This Coxiella burnetii (strain CbuG_Q212) (Coxiella burnetii (strain Q212)) protein is Small ribosomal subunit protein uS7.